The primary structure comprises 593 residues: Aspartate--tRNA(Asp/Asn) ligase (593 aa).

Glu175 is a binding site for L-aspartate. The segment at 199–202 (QQYK) is aspartate. L-aspartate is bound by residues Arg221 and His452. 221-223 (RDE) contacts ATP. Glu486 lines the ATP pocket. Arg493 contributes to the L-aspartate binding site. An ATP-binding site is contributed by 538 to 541 (GVDR).

Belongs to the class-II aminoacyl-tRNA synthetase family. Type 1 subfamily. In terms of assembly, homodimer.

It localises to the cytoplasm. The enzyme catalyses tRNA(Asx) + L-aspartate + ATP = L-aspartyl-tRNA(Asx) + AMP + diphosphate. In terms of biological role, aspartyl-tRNA synthetase with relaxed tRNA specificity since it is able to aspartylate not only its cognate tRNA(Asp) but also tRNA(Asn). Reaction proceeds in two steps: L-aspartate is first activated by ATP to form Asp-AMP and then transferred to the acceptor end of tRNA(Asp/Asn). The chain is Aspartate--tRNA(Asp/Asn) ligase from Novosphingobium aromaticivorans (strain ATCC 700278 / DSM 12444 / CCUG 56034 / CIP 105152 / NBRC 16084 / F199).